A 183-amino-acid polypeptide reads, in one-letter code: MSRLWVTGYRSYELSIFSDQDPKLKVIQNALKRKLIEKVESGTTWIIAGPQLGTEQWSLELANELKMDYPELQTALMFPFSDFGKQWKEEKVEKLALIKAKVDFFANVSENPYQNPQQLRNYQNFMLNHTDEALLLYDDEHEGKTKFDLNAIRSFQEHNSYNVETIDFYDLEEESMLYEEKDE.

Belongs to the UPF0398 family.

The protein is UPF0398 protein PEPE_0933 of Pediococcus pentosaceus (strain ATCC 25745 / CCUG 21536 / LMG 10740 / 183-1w).